Reading from the N-terminus, the 505-residue chain is Protein disulfide-isomerase A3 (505 aa).

A signal peptide spans 1 to 24 (MRLRRLALFPGVALLLAAARLAAA). Residues 25–133 (SDVLELTDDN…IVSHLKKQAG (109 aa)) enclose the Thioredoxin 1 domain. Residues Cys57 and Cys60 each act as nucleophile in the active site. An intrachain disulfide couples Cys57 to Cys60. Residue Lys61 is modified to N6-methyllysine. An intrachain disulfide couples Cys85 to Cys92. Lys129 is subject to N6-succinyllysine. An N6-acetyllysine modification is found at Lys152. Residue Lys218 is modified to N6-succinyllysine. Lys252 carries the post-translational modification N6-acetyllysine. Thr319 bears the Phosphothreonine mark. Residues 343 to 485 (SRDGKALERF…FISYLQREAT (143 aa)) form the Thioredoxin 2 domain. Lys362 is modified (N6-acetyllysine). Active-site nucleophile residues include Cys406 and Cys409. Cys406 and Cys409 are oxidised to a cystine. The disordered stretch occupies residues 484-505 (ATNPPVIQEEKPKKKKKAQEDL). Residues 491 to 505 (QEEKPKKKKKAQEDL) show a composition bias toward basic and acidic residues. Lys494 carries the post-translational modification N6-acetyllysine. Positions 502-505 (QEDL) match the Prevents secretion from ER motif.

This sequence belongs to the protein disulfide isomerase family. In terms of assembly, part of the major histocompatibility complex class I (MHC I) peptide loading complex composed of TAP1, TAP2, B2M, MHC heavy chain, TAPBP, PDIA3, and CALR. Interacts with ERP27 and CANX. Interacts with SERPINA2 and with SERPINA1. Interacts with ATP2A2. Post-translationally, within the major histocompatibility complex class I (MHC I) peptide loading complex forms reversible disulfide-linked heterodimers with TAPBP as part of its protein folding chaperone activity. This is essential to assist the dynamic assembly of the MHC I complex with high affinity antigens in the endoplasmic reticulum. Phosphorylated.

It is found in the endoplasmic reticulum. It localises to the endoplasmic reticulum lumen. The protein resides in the melanosome. The enzyme catalyses Catalyzes the rearrangement of -S-S- bonds in proteins.. Functionally, protein disulfide isomerase that catalyzes the formation, isomerization, and reduction or oxidation of disulfide bonds in client proteins and functions as a protein folding chaperone. Core component of the major histocompatibility complex class I (MHC I) peptide loading complex where it functions as an essential folding chaperone for TAPBP. Through TAPBP, assists the dynamic assembly of the MHC I complex with high affinity antigens in the endoplasmic reticulum. Therefore, plays a crucial role in the presentation of antigens to cytotoxic T cells in adaptive immunity. The sequence is that of Protein disulfide-isomerase A3 (PDIA3) from Chlorocebus aethiops (Green monkey).